We begin with the raw amino-acid sequence, 467 residues long: ATP synthase subunit beta (467 aa).

154–161 lines the ATP pocket; it reads GGAGVGKT.

Belongs to the ATPase alpha/beta chains family. F-type ATPases have 2 components, CF(1) - the catalytic core - and CF(0) - the membrane proton channel. CF(1) has five subunits: alpha(3), beta(3), gamma(1), delta(1), epsilon(1). CF(0) has three main subunits: a(1), b(2) and c(9-12). The alpha and beta chains form an alternating ring which encloses part of the gamma chain. CF(1) is attached to CF(0) by a central stalk formed by the gamma and epsilon chains, while a peripheral stalk is formed by the delta and b chains.

It is found in the cell inner membrane. The catalysed reaction is ATP + H2O + 4 H(+)(in) = ADP + phosphate + 5 H(+)(out). Produces ATP from ADP in the presence of a proton gradient across the membrane. The catalytic sites are hosted primarily by the beta subunits. The polypeptide is ATP synthase subunit beta (Leptospira interrogans serogroup Icterohaemorrhagiae serovar copenhageni (strain Fiocruz L1-130)).